The chain runs to 756 residues: Ribonucleoside-diphosphate reductase subunit alpha (756 aa).

One can recognise an ATP-cone domain in the interval 5 to 95 (LMVTKRDGTQ…IFHLRKKAYG (91 aa)). Residues Lys9, 15–21 (EQINLDK), Thr55, and Lys91 contribute to the ATP site. GDP is bound at residue Thr209. A disulfide bridge links Cys225 with Cys462. DTTP contacts are provided by residues 232–234 (DSL), Arg262, and Arg269. GDP is bound at residue Asn437. Catalysis depends on Asn437, which acts as the Proton acceptor. Cys439 (cysteine radical intermediate) is an active-site residue. GDP-binding positions include Glu441 and 623-625 (ETS). Glu441 serves as the catalytic Proton acceptor.

This sequence belongs to the ribonucleoside diphosphate reductase large chain family. In terms of assembly, tetramer of two alpha and two beta subunits.

The enzyme catalyses a 2'-deoxyribonucleoside 5'-diphosphate + [thioredoxin]-disulfide + H2O = a ribonucleoside 5'-diphosphate + [thioredoxin]-dithiol. Its activity is regulated as follows. Under complex allosteric control mediated by deoxynucleoside triphosphates and ATP binding to separate specificity and activation sites on the alpha subunit. The type of nucleotide bound at the specificity site determines substrate preference. It seems probable that ATP makes the enzyme reduce CDP and UDP, dGTP favors ADP reduction and dTTP favors GDP reduction. Stimulated by ATP and inhibited by dATP binding to the activity site. Its function is as follows. Provides the precursors necessary for DNA synthesis. Catalyzes the biosynthesis of deoxyribonucleotides from the corresponding ribonucleotides. The chain is Ribonucleoside-diphosphate reductase subunit alpha (nrdA) from Haemophilus influenzae (strain ATCC 51907 / DSM 11121 / KW20 / Rd).